The sequence spans 410 residues: Regulator of microtubule dynamics protein 2 (410 aa).

The chain crosses the membrane as a helical span at residues 9 to 28; sequence LILGIMAGTAGISLLAFWYH. Ser-51 is modified (phosphoserine). A coiled-coil region spans residues 69-110; sequence QRRQLQILEKLNELLTNMEELKEEIRFLKETIPKLEECIQDE. The interval 120–151 is disordered; the sequence is ISPQHRARKKKGTTVQRSATSNSSEEAESEGG. Ser-121 carries the post-translational modification Phosphoserine. A compositionally biased stretch (basic residues) spans 121–131; sequence SPQHRARKKKG. Thr-139 is subject to Phosphothreonine. Tyr-152 is modified (phosphotyrosine). Thr-154 and Thr-157 each carry phosphothreonine.

It belongs to the RMDN family. As to quaternary structure, interacts with microtubules.

The protein resides in the membrane. It is found in the cytoplasm. Its subcellular location is the cytoskeleton. The protein localises to the spindle. It localises to the spindle pole. This Mus musculus (Mouse) protein is Regulator of microtubule dynamics protein 2 (Rmdn2).